The sequence spans 229 residues: 7-cyano-7-deazaguanine synthase (229 aa).

Leu14–Leu24 is a binding site for ATP. Residues Cys192, Cys200, Cys203, and Cys206 each contribute to the Zn(2+) site.

The protein belongs to the QueC family. The cofactor is Zn(2+).

It carries out the reaction 7-carboxy-7-deazaguanine + NH4(+) + ATP = 7-cyano-7-deazaguanine + ADP + phosphate + H2O + H(+). It participates in purine metabolism; 7-cyano-7-deazaguanine biosynthesis. Its function is as follows. Catalyzes the ATP-dependent conversion of 7-carboxy-7-deazaguanine (CDG) to 7-cyano-7-deazaguanine (preQ(0)). The sequence is that of 7-cyano-7-deazaguanine synthase from Laribacter hongkongensis (strain HLHK9).